Consider the following 95-residue polypeptide: Large ribosomal subunit protein eL37y (95 aa).

The Zn(2+) site is built by Cys-19, Cys-22, Cys-34, and Cys-37. The C4-type zinc-finger motif lies at 19–37 (CVRCGRRSFHIQKSRCSAC).

Belongs to the eukaryotic ribosomal protein eL37 family. The cofactor is Zn(2+).

Binds to the 23S rRNA. This Arabidopsis thaliana (Mouse-ear cress) protein is Large ribosomal subunit protein eL37y (RPL37B).